A 429-amino-acid polypeptide reads, in one-letter code: UPF0597 protein BT_2080 (429 aa).

This sequence belongs to the UPF0597 family.

The sequence is that of UPF0597 protein BT_2080 from Bacteroides thetaiotaomicron (strain ATCC 29148 / DSM 2079 / JCM 5827 / CCUG 10774 / NCTC 10582 / VPI-5482 / E50).